Consider the following 210-residue polypeptide: MEALGGYPSKSSASRAGLFKVLLSVALCMGSLYLLQNKLSKSRKTKDFYSYEVKDARGRTVSLEKYRGKVSLVVNVASGSELTEQSYRALQELHRELGTSHFNVLAFPCSQYGDTESGTSREIEAFAKSNYGVTFPIFNKIKIMGSEAEPAFRFLTDSVQKIPRWNFWKFLVSPEGQVVRFWKPEEPVSDIRKEATTLVRNIILKKRQEL.

A helical transmembrane segment spans residues 13-35; it reads ASRAGLFKVLLSVALCMGSLYLL.

The protein belongs to the glutathione peroxidase family.

The protein resides in the membrane. The enzyme catalyses 2 glutathione + H2O2 = glutathione disulfide + 2 H2O. The sequence is that of Probable glutathione peroxidase 8 (gpx8) from Danio rerio (Zebrafish).